The chain runs to 395 residues: Galactokinase (395 aa).

39-42 (EHTD) lines the substrate pocket. ATP-binding positions include Ser-73 and 127-133 (GAGLSSS). The Mg(2+) site is built by Ser-133 and Glu-165. Residue Asp-177 is the Proton acceptor of the active site. Tyr-227 contacts substrate.

Belongs to the GHMP kinase family. GalK subfamily.

It localises to the cytoplasm. It carries out the reaction alpha-D-galactose + ATP = alpha-D-galactose 1-phosphate + ADP + H(+). Its pathway is carbohydrate metabolism; galactose metabolism. Its function is as follows. Catalyzes the transfer of the gamma-phosphate of ATP to D-galactose to form alpha-D-galactose-1-phosphate (Gal-1-P). This is Galactokinase from Halalkalibacterium halodurans (strain ATCC BAA-125 / DSM 18197 / FERM 7344 / JCM 9153 / C-125) (Bacillus halodurans).